The following is a 297-amino-acid chain: Acetaldehyde dehydrogenase (297 aa).

NAD(+) is bound at residue 18–21 (TGNI). Residue Cys-133 is the Acyl-thioester intermediate of the active site. Residues 165 to 173 (SAGPATRLN) and Asn-275 contribute to the NAD(+) site.

Belongs to the acetaldehyde dehydrogenase family.

The enzyme catalyses acetaldehyde + NAD(+) + CoA = acetyl-CoA + NADH + H(+). The protein is Acetaldehyde dehydrogenase of Spirochaeta aurantia.